Consider the following 243-residue polypeptide: Triosephosphate isomerase (243 aa).

A substrate-binding site is contributed by 9 to 11; sequence NWK. His96 (electrophile) is an active-site residue. Catalysis depends on Glu165, which acts as the Proton acceptor. Substrate-binding positions include Gly171, Ser204, and 225-226; that span reads GG.

Belongs to the triosephosphate isomerase family. As to quaternary structure, homodimer.

It is found in the cytoplasm. The catalysed reaction is D-glyceraldehyde 3-phosphate = dihydroxyacetone phosphate. Its pathway is carbohydrate biosynthesis; gluconeogenesis. It functions in the pathway carbohydrate degradation; glycolysis; D-glyceraldehyde 3-phosphate from glycerone phosphate: step 1/1. Functionally, involved in the gluconeogenesis. Catalyzes stereospecifically the conversion of dihydroxyacetone phosphate (DHAP) to D-glyceraldehyde-3-phosphate (G3P). The polypeptide is Triosephosphate isomerase (Synechococcus sp. (strain WH7803)).